A 376-amino-acid chain; its full sequence is Oligopeptide transport system permease protein OppC (376 aa).

A run of 7 helical transmembrane segments spans residues 46 to 66, 149 to 169, 173 to 193, 209 to 229, 242 to 262, 297 to 317, and 341 to 361; these read WAIL…IVPL, FPLL…WASV, LWIA…YGAV, IIEI…GATF, VIFT…RIYI, LAVV…SLVF, and VALI…ARTF. The region spanning 169–366 is the ABC transmembrane type-1 domain; sequence VAKSLWIAVV…AARTFANALN (198 aa).

Belongs to the binding-protein-dependent transport system permease family. OppBC subfamily. As to quaternary structure, the complex is composed of two ATP-binding proteins (OppD and OppF), two transmembrane proteins (OppB and OppC) and a solute-binding protein (OppA).

Its subcellular location is the cell membrane. Part of the ABC transporter complex OppABCDF involved in the uptake of oligopeptides. Probably responsible for the translocation of the substrate across the membrane. The sequence is that of Oligopeptide transport system permease protein OppC (oppC) from Mycoplasma genitalium (strain ATCC 33530 / DSM 19775 / NCTC 10195 / G37) (Mycoplasmoides genitalium).